Here is a 162-residue protein sequence, read N- to C-terminus: Succinate dehydrogenase assembly factor 2-A, mitochondrial (162 aa).

The N-terminal 23 residues, M1–M23, are a transit peptide targeting the mitochondrion.

The protein belongs to the SDHAF2 family. Interacts with the flavoprotein subunit within the SDH catalytic dimer.

It is found in the mitochondrion matrix. Plays an essential role in the assembly of succinate dehydrogenase (SDH), an enzyme complex (also referred to as respiratory complex II) that is a component of both the tricarboxylic acid (TCA) cycle and the mitochondrial electron transport chain, and which couples the oxidation of succinate to fumarate with the reduction of ubiquinone (coenzyme Q) to ubiquinol. Required for flavinylation (covalent attachment of FAD) of the flavoprotein subunit of the SDH catalytic dimer. This Drosophila erecta (Fruit fly) protein is Succinate dehydrogenase assembly factor 2-A, mitochondrial.